The chain runs to 215 residues: Octanoyltransferase (215 aa).

Residues 31-206 (PDSQDEIWLV…QLVKHLDYAE (176 aa)) form the BPL/LPL catalytic domain. Substrate-binding positions include 70–77 (RGGQVTYH), 137–139 (SLG), and 150–152 (GLA). The active-site Acyl-thioester intermediate is Cys-168.

It belongs to the LipB family.

The protein localises to the cytoplasm. It carries out the reaction octanoyl-[ACP] + L-lysyl-[protein] = N(6)-octanoyl-L-lysyl-[protein] + holo-[ACP] + H(+). It functions in the pathway protein modification; protein lipoylation via endogenous pathway; protein N(6)-(lipoyl)lysine from octanoyl-[acyl-carrier-protein]: step 1/2. In terms of biological role, catalyzes the transfer of endogenously produced octanoic acid from octanoyl-acyl-carrier-protein onto the lipoyl domains of lipoate-dependent enzymes. Lipoyl-ACP can also act as a substrate although octanoyl-ACP is likely to be the physiological substrate. This Pseudomonas putida (strain ATCC 700007 / DSM 6899 / JCM 31910 / BCRC 17059 / LMG 24140 / F1) protein is Octanoyltransferase.